Reading from the N-terminus, the 88-residue chain is MKPGIHPDYREVVFQDMSNGFKFITRSTIQTRETIEHEGKTYPLAKIEVSSESHSFYTGQQKIMDTAGRVEKFKNKFGARANGKAAAK.

This sequence belongs to the bacterial ribosomal protein bL31 family. Type B subfamily. In terms of assembly, part of the 50S ribosomal subunit.

The polypeptide is Large ribosomal subunit protein bL31B (Burkholderia orbicola (strain MC0-3)).